A 529-amino-acid chain; its full sequence is hal-like protein DDB_G0273787/DDB_G0273081 (529 aa).

The 5-imidazolinone (Ala-Gly) cross-link spans alanine 151–glycine 153. At serine 152 the chain carries 2,3-didehydroalanine (Ser).

This sequence belongs to the PAL/histidase family. Post-translationally, contains an active site 4-methylidene-imidazol-5-one (MIO), which is formed autocatalytically by cyclization and dehydration of residues Ala-Ser-Gly.

Its subcellular location is the cytoplasm. The catalysed reaction is L-histidine = trans-urocanate + NH4(+). Its pathway is amino-acid degradation; L-histidine degradation into L-glutamate; N-formimidoyl-L-glutamate from L-histidine: step 1/3. The protein is hal-like protein DDB_G0273787/DDB_G0273081 of Dictyostelium discoideum (Social amoeba).